The sequence spans 341 residues: Paired box protein Pax-9 (341 aa).

Positions 4 to 130 (AFGEVNQLGG…SSISRILRNK (127 aa)) form a DNA-binding region, paired. The interval 7–63 (EVNQLGGVFVNGRPLPNAIRLRIVELAQLGIRPCDISRQLRVSHGCVSKILARYNET) is PAI subdomain. The RED subdomain stretch occupies residues 82–130 (TVVKHIRTYKQRDPGIFAWEIRDRLLADGVCDKYNVPSVSSISRILRNK). Residues 168–189 (AAAAKVPTPPGVPAIPGSVAMP) form an interaction with KDM5B region.

In terms of assembly, interacts with KDM5B.

It is found in the nucleus. Transcription factor required for normal development of thymus, parathyroid glands, ultimobranchial bodies, teeth, skeletal elements of skull and larynx as well as distal limbs. This is Paired box protein Pax-9 (PAX9) from Macaca mulatta (Rhesus macaque).